A 430-amino-acid chain; its full sequence is Enolase (430 aa).

Q163 is a (2R)-2-phosphoglycerate binding site. E205 serves as the catalytic Proton donor. Residues D242, E287, and D314 each contribute to the Mg(2+) site. K339, R368, S369, and K390 together coordinate (2R)-2-phosphoglycerate. The active-site Proton acceptor is the K339.

The protein belongs to the enolase family. The cofactor is Mg(2+).

It is found in the cytoplasm. The protein resides in the secreted. The protein localises to the cell surface. The enzyme catalyses (2R)-2-phosphoglycerate = phosphoenolpyruvate + H2O. It participates in carbohydrate degradation; glycolysis; pyruvate from D-glyceraldehyde 3-phosphate: step 4/5. Its function is as follows. Catalyzes the reversible conversion of 2-phosphoglycerate (2-PG) into phosphoenolpyruvate (PEP). It is essential for the degradation of carbohydrates via glycolysis. This Clostridioides difficile (strain 630) (Peptoclostridium difficile) protein is Enolase.